The primary structure comprises 109 residues: Large ribosomal subunit protein uL22 (109 aa).

This sequence belongs to the universal ribosomal protein uL22 family. As to quaternary structure, part of the 50S ribosomal subunit.

Functionally, this protein binds specifically to 23S rRNA; its binding is stimulated by other ribosomal proteins, e.g. L4, L17, and L20. It is important during the early stages of 50S assembly. It makes multiple contacts with different domains of the 23S rRNA in the assembled 50S subunit and ribosome. The globular domain of the protein is located near the polypeptide exit tunnel on the outside of the subunit, while an extended beta-hairpin is found that lines the wall of the exit tunnel in the center of the 70S ribosome. The sequence is that of Large ribosomal subunit protein uL22 from Ralstonia pickettii (strain 12J).